The chain runs to 310 residues: Retrotransposon Gag-like protein 4 (310 aa).

Residues 278 to 295 form a CCHC-type zinc finger; it reads QLCLYCSQSGHFTRDCLA.

Involved in cognitive function in the brain, possibly via the noradrenergic system. The protein is Retrotransposon Gag-like protein 4 of Homo sapiens (Human).